A 1096-amino-acid polypeptide reads, in one-letter code: Protein spire (1096 aa).

Disordered regions lie at residues 1 to 79 (MTEH…GNGT) and 184 to 211 (VESQEQEASQQEQQQKQPQMDDSATSSV). Positions 37 to 51 (LSTSPDSANGDAQQA) are enriched in polar residues. Over residues 53-65 (THTHIISHTHSKG) the composition is skewed to basic residues. Composition is skewed to low complexity over residues 66–77 (AAKTQTQTQNGN) and 189–201 (QEASQQEQQQKQP). One can recognise a KIND domain in the interval 111-366 (VTLNNILDSF…RALATETIEL (256 aa)). The stretch at 315–340 (KRWDDEAEEERNDTKELEHIIETCRN) forms a coiled coil. 2 consecutive WH2 domains span residues 436–454 (PYEILMGDIRAKKYQLRKV) and 500–517 (PREQLMESIRQGKELKQI). Disordered stretches follow at residues 560–588 (DDSSMSSSHSTAATHQHHQQHQPHHAHLA), 614–656 (QECQ…PSFT), and 693–762 (QSNL…LGPW). Basic residues predominate over residues 574–585 (HQHHQQHQPHHA). Composition is skewed to low complexity over residues 633-645 (APRQTLPQPQAQA) and 714-725 (DAGSQSQSGASS). A compositionally biased stretch (basic and acidic residues) spans 737–754 (EGDHSQTTDGPPRLDEAH). The tract at residues 780-800 (LSVTLAEIVHIRSVMTKAELE) is spir-box. Positions 874–894 (PASSSTPSPSHHAHQAHSSST) are enriched in low complexity. 3 disordered regions span residues 874-899 (PASSSTPSPSHHAHQAHSSSTGNIMD), 912-958 (RSES…APGH), and 997-1021 (RSMEGPRSLPVHSPAYRPLSNSSTL). Positions 921–941 (STVGSAPSSPKHQRSNMSTPG) are enriched in polar residues.

It belongs to the spire family. Interacts with bsk, Rho1, Rac1, Cdc42 and wash. Interacts with capu. Post-translationally, phosphorylated by Jnk kinase (bsk).

It is found in the cytoplasm. Its subcellular location is the cytoskeleton. It localises to the perinuclear region. The protein localises to the cell membrane. The protein resides in the cytoplasmic vesicle membrane. In terms of biological role, acts as an actin nucleation factor, remains associated with the slow-growing pointed end of the new filament. Promotes dissociation of capu from the barbed end of actin filaments. Involved in intracellular vesicle transport along actin fibers, providing a novel link between actin cytoskeleton dynamics and intracellular transport. Required for localization of determinants within the developing oocyte to the posterior pole and to the dorsal anterior corner. Links Rho family signaling and Jnk function to the actin cytoskeleton. In Drosophila pseudoobscura pseudoobscura (Fruit fly), this protein is Protein spire.